We begin with the raw amino-acid sequence, 403 residues long: S-adenosylmethionine synthase (403 aa).

An ATP-binding site is contributed by histidine 15. Mg(2+) is bound at residue aspartate 17. Glutamate 43 provides a ligand contact to K(+). L-methionine contacts are provided by glutamate 56 and glutamine 99. The flexible loop stretch occupies residues 99–109; the sequence is QSPDINQGVDR. Residues 166–168, 232–233, aspartate 241, 247–248, alanine 264, and lysine 268 each bind ATP; these read DAK, KF, and RK. Aspartate 241 provides a ligand contact to L-methionine. Lysine 272 provides a ligand contact to L-methionine.

The protein belongs to the AdoMet synthase family. Homotetramer; dimer of dimers. Mg(2+) is required as a cofactor. It depends on K(+) as a cofactor.

Its subcellular location is the cytoplasm. It carries out the reaction L-methionine + ATP + H2O = S-adenosyl-L-methionine + phosphate + diphosphate. It functions in the pathway amino-acid biosynthesis; S-adenosyl-L-methionine biosynthesis; S-adenosyl-L-methionine from L-methionine: step 1/1. Catalyzes the formation of S-adenosylmethionine (AdoMet) from methionine and ATP. The overall synthetic reaction is composed of two sequential steps, AdoMet formation and the subsequent tripolyphosphate hydrolysis which occurs prior to release of AdoMet from the enzyme. The chain is S-adenosylmethionine synthase from Xanthomonas campestris pv. campestris (strain ATCC 33913 / DSM 3586 / NCPPB 528 / LMG 568 / P 25).